The chain runs to 370 residues: tRNA-specific 2-thiouridylase MnmA (370 aa).

Residues 9 to 16 (GLSGGVDS) and methionine 35 each bind ATP. Residues 95 to 97 (NPD) are interaction with target base in tRNA. Cysteine 100 acts as the Nucleophile in catalysis. A disulfide bridge links cysteine 100 with cysteine 198. ATP is bound at residue glycine 124. Residues 148–150 (KDQ) are interaction with tRNA. The active-site Cysteine persulfide intermediate is cysteine 198. An interaction with tRNA region spans residues 316 to 317 (RY).

It belongs to the MnmA/TRMU family.

The protein resides in the cytoplasm. The catalysed reaction is S-sulfanyl-L-cysteinyl-[protein] + uridine(34) in tRNA + AH2 + ATP = 2-thiouridine(34) in tRNA + L-cysteinyl-[protein] + A + AMP + diphosphate + H(+). Catalyzes the 2-thiolation of uridine at the wobble position (U34) of tRNA, leading to the formation of s(2)U34. The polypeptide is tRNA-specific 2-thiouridylase MnmA (Acidovorax ebreus (strain TPSY) (Diaphorobacter sp. (strain TPSY))).